The chain runs to 317 residues: Transaldolase 1 (317 aa).

K132 acts as the Schiff-base intermediate with substrate in catalysis.

This sequence belongs to the transaldolase family. Type 1 subfamily. In terms of assembly, homodimer.

The protein resides in the cytoplasm. It carries out the reaction D-sedoheptulose 7-phosphate + D-glyceraldehyde 3-phosphate = D-erythrose 4-phosphate + beta-D-fructose 6-phosphate. Its pathway is carbohydrate degradation; pentose phosphate pathway; D-glyceraldehyde 3-phosphate and beta-D-fructose 6-phosphate from D-ribose 5-phosphate and D-xylulose 5-phosphate (non-oxidative stage): step 2/3. In terms of biological role, transaldolase is important for the balance of metabolites in the pentose-phosphate pathway. This chain is Transaldolase 1, found in Salmonella paratyphi A (strain ATCC 9150 / SARB42).